Consider the following 356-residue polypeptide: Replication factor C subunit 3 (356 aa).

At K20 the chain carries N6-acetyllysine. At S125 the chain carries Phosphoserine.

The protein belongs to the activator 1 small subunits family. Subunit of the RFC complex, an heteropentameric complex consisting of a large subunit RFC1 and four small subunits RFC2, RFC3, RFC4 and RFC5; the RFC complex interacts with PCNA. Forms an heterotetrameric complex with RFC2, RFC4 and RFC5; this complex has ATPase activity but is not stimulated by PCNA. The heterotetramer of subunits RFC2, RFC3, RFC4 and RFC5 interacts with RAD17. Interacts with CNTD1; this interaction facilitates crossover formation.

It is found in the nucleus. Its function is as follows. Subunit of the replication factor C (RFC) complex which acts during elongation of primed DNA templates by DNA polymerases delta and epsilon, and is necessary for ATP-dependent loading of proliferating cell nuclear antigen (PCNA) onto primed DNA. In Homo sapiens (Human), this protein is Replication factor C subunit 3 (RFC3).